The primary structure comprises 597 residues: Elongation factor 4 (597 aa).

One can recognise a tr-type G domain in the interval 2-184 (KNIRNFSIIA…EVVNKIPPPK (183 aa)). GTP contacts are provided by residues 14-19 (DHGKST) and 131-134 (NKID).

It belongs to the TRAFAC class translation factor GTPase superfamily. Classic translation factor GTPase family. LepA subfamily.

The protein resides in the cell inner membrane. The enzyme catalyses GTP + H2O = GDP + phosphate + H(+). Its function is as follows. Required for accurate and efficient protein synthesis under certain stress conditions. May act as a fidelity factor of the translation reaction, by catalyzing a one-codon backward translocation of tRNAs on improperly translocated ribosomes. Back-translocation proceeds from a post-translocation (POST) complex to a pre-translocation (PRE) complex, thus giving elongation factor G a second chance to translocate the tRNAs correctly. Binds to ribosomes in a GTP-dependent manner. The protein is Elongation factor 4 of Chromobacterium violaceum (strain ATCC 12472 / DSM 30191 / JCM 1249 / CCUG 213 / NBRC 12614 / NCIMB 9131 / NCTC 9757 / MK).